The primary structure comprises 860 residues: MQEQYRPEEIESKVQLHWDEKRTFEVTEDESKEKYYCLSMLPYPSGRLHMGHVRNYTIGDVIARYQRMLGKNVLQPIGWDAFGLPAEGAAVKNNTAPAPWTYDNIAYMKNQLKMLGFGYDWSRELATCTPEYYRWEQKFFTELYKKGLVYKKTSAVNWCPNDQTVLANEQVIDGCCWRCDTKVERKEIPQWFIKITAYADELLNDLDKLDHWPDTVKTMQRNWIGRSEGVEITFNVNDYDNTLTVYTTRPDTFMGCTYLAVAAGHPLAQKAAENNPELAAFIDECRNTKVAEAEMATMEKKGVDTGFKAVHPLTGEEIPVWAANFVLMEYGTGAVMAVPGHDQRDYEFASKYGLNIKPVILAADGSEPDLSQQALTEKGVLFNSGEFNGLDHEAAFNAIADKLTAMGVGERKVNYRLRDWGVSRQRYWGAPIPMVTLEDGTVMPTPDDQLPVILPEDVVMDGITSPIKADPEWAKTTVNGMPALRETDTFDTFMESSWYYARYTCPQYKEGMLDSKAANYWLPVDIYIGGIEHAIMHLLYFRFFHKLMRDAGMVNSDEPAKQLLCQGMVLADAFYYVGENGERNWVSPVDAIVERDEKGRIVKAKDAAGHELVYTGMSKMSKSKNNGIDPQVMVERYGADTVRLFMMFASPADMTLEWQESGVEGANRFLKRVWKLVYEHTAKGDVAALNVDALTEDQKALRRDVHKTIAKVTDDIGRRQTFNTAIAAIMELMNKLAKAPTDGEQDRALMQEALLAVVRMLNPFTPHICFTLWQELKGEGDIDNAPWPVADEKAMVEDSTLVVVQVNGKVRAKITVPVDATEEQVRERAGQEHLVAKYLDGVTVRKVIYVPGKLLNLVVG.

Positions Pro-42 to His-52 match the 'HIGH' region motif. The 'KMSKS' region motif lies at Lys-619–Ser-623. Lys-622 is a binding site for ATP.

This sequence belongs to the class-I aminoacyl-tRNA synthetase family.

The protein localises to the cytoplasm. The enzyme catalyses tRNA(Leu) + L-leucine + ATP = L-leucyl-tRNA(Leu) + AMP + diphosphate. This is Leucine--tRNA ligase from Escherichia coli O127:H6 (strain E2348/69 / EPEC).